A 272-amino-acid polypeptide reads, in one-letter code: Endoplasmic reticulum resident protein 27 (272 aa).

The first 25 residues, 1-25, serve as a signal peptide directing secretion; sequence MEAMPSRCLFLLFLSTCKLSPEVVA. One can recognise a Thioredoxin domain in the interval 38–151; it reads EPMRLTDVQA…LVTEYNAITA (114 aa). Asparagine 99 carries an N-linked (GlcNAc...) asparagine glycan. The PDIA3-binding site stretch occupies residues 229 to 232; the sequence is DKWD. A Prevents secretion from ER motif is present at residues 269–272; the sequence is KVEL.

Belongs to the protein disulfide isomerase family. Interacts with PDIA3.

The protein localises to the endoplasmic reticulum lumen. Functionally, specifically binds unfolded proteins and may recruit protein disulfide isomerase PDIA3 to unfolded substrates. Binds protein substrates via a hydrophobic pocket in the C-terminal domain. May play a role in the unfolded stress response. The protein is Endoplasmic reticulum resident protein 27 (ERP27) of Bos taurus (Bovine).